The primary structure comprises 273 residues: Large ribosomal subunit protein uL2cz/uL2cy (273 aa).

Disordered regions lie at residues 1–24 (MAIH…QAKS) and 224–254 (NPVD…PALG).

This sequence belongs to the universal ribosomal protein uL2 family. Part of the 50S ribosomal subunit.

Its subcellular location is the plastid. It is found in the chloroplast. The polypeptide is Large ribosomal subunit protein uL2cz/uL2cy (rpl2-A) (Nymphaea alba (White water-lily)).